The sequence spans 365 residues: 5-hydroxytryptamine receptor 1F (365 aa).

Over 1–24 the chain is Extracellular; it reads MDFLNSSDQNLTSEELLNRMPSKI. N-linked (GlcNAc...) asparagine glycosylation is found at N5 and N10. A helical transmembrane segment spans residues 25-49; that stretch reads LVSLTLSGLALMTTTINSLVIAAII. Over 50–59 the chain is Cytoplasmic; the sequence is VTRKLHHPAN. The chain crosses the membrane as a helical span at residues 60–81; that stretch reads YLICSLAVTDFLVAVLVMPFSI. The Extracellular segment spans residues 82-96; that stretch reads VYIVRESWIMGQVVC. C96 and C172 are disulfide-bonded. A helical membrane pass occupies residues 97–119; it reads DIWLSVDITCCTCSILHLSAIAL. Positions 103 and 107 each coordinate serotonin. Positions 120 to 122 match the DRY motif; important for ligand-induced conformation changes motif; that stretch reads DRY. The Cytoplasmic segment spans residues 120–139; that stretch reads DRYRAITDAVEYARKRTPKH. A helical membrane pass occupies residues 140-159; sequence AGIMITIVWIISVFISMPPL. Residues 160–178 lie on the Extracellular side of the membrane; it reads FWRHQGTSRDDECIIKHDH. A helical transmembrane segment spans residues 179 to 202; the sequence is IVSTIYSTFGAFYIPLALILILYY. Over 203-291 the chain is Cytoplasmic; it reads KIYRAAKTLY…KISGTRERKA (89 aa). Residues 292–315 form a helical membrane-spanning segment; the sequence is ATTLGLILGAFVICWLPFFVKELV. At 316–327 the chain is on the extracellular side; that stretch reads VNVCDKCKISEE. The chain crosses the membrane as a helical span at residues 328–350; the sequence is MSNFLAWLGYLNSLINPLIYTIF. Positions 343–347 match the NPxxY motif; important for ligand-induced conformation changes and signaling motif; that stretch reads NPLIY. At 351 to 365 the chain is on the cytoplasmic side; sequence NEDFKKAFQKLVRCR.

It belongs to the G-protein coupled receptor 1 family.

It is found in the cell membrane. G-protein coupled receptor for 5-hydroxytryptamine (serotonin). Also functions as a receptor for various alkaloids and psychoactive substances. Ligand binding causes a conformation change that triggers signaling via guanine nucleotide-binding proteins (G proteins) and modulates the activity of downstream effectors, such as adenylate cyclase. HTR1F is coupled to G(i)/G(o) G alpha proteins and mediates inhibitory neurotransmission by inhibiting adenylate cyclase activity. This chain is 5-hydroxytryptamine receptor 1F (HTR1F), found in Pan troglodytes (Chimpanzee).